Consider the following 154-residue polypeptide: Myoglobin (154 aa).

The Globin domain occupies 2–148 (GLSDDEWHHV…FRNDMASKYK (147 aa)). Nitrite is bound at residue histidine 65. An O2-binding site is contributed by histidine 65. Histidine 94 is a binding site for heme b.

Belongs to the globin family. As to quaternary structure, monomeric.

The protein localises to the cytoplasm. The protein resides in the sarcoplasm. It catalyses the reaction Fe(III)-heme b-[protein] + nitric oxide + H2O = Fe(II)-heme b-[protein] + nitrite + 2 H(+). It carries out the reaction H2O2 + AH2 = A + 2 H2O. Its function is as follows. Monomeric heme protein which primary function is to store oxygen and facilitate its diffusion within muscle tissues. Reversibly binds oxygen through a pentacoordinated heme iron and enables its timely and efficient release as needed during periods of heightened demand. Depending on the oxidative conditions of tissues and cells, and in addition to its ability to bind oxygen, it also has a nitrite reductase activity whereby it regulates the production of bioactive nitric oxide. Under stress conditions, like hypoxia and anoxia, it also protects cells against reactive oxygen species thanks to its pseudoperoxidase activity. This chain is Myoglobin (MB), found in Graptemys geographica (Common map turtle).